The following is a 273-amino-acid chain: Ribosomal RNA small subunit methyltransferase A (273 aa).

Residues Asn18, Leu20, Gly45, Glu66, Asp91, and Asn113 each coordinate S-adenosyl-L-methionine.

Belongs to the class I-like SAM-binding methyltransferase superfamily. rRNA adenine N(6)-methyltransferase family. RsmA subfamily.

Its subcellular location is the cytoplasm. It catalyses the reaction adenosine(1518)/adenosine(1519) in 16S rRNA + 4 S-adenosyl-L-methionine = N(6)-dimethyladenosine(1518)/N(6)-dimethyladenosine(1519) in 16S rRNA + 4 S-adenosyl-L-homocysteine + 4 H(+). Functionally, specifically dimethylates two adjacent adenosines (A1518 and A1519) in the loop of a conserved hairpin near the 3'-end of 16S rRNA in the 30S particle. May play a critical role in biogenesis of 30S subunits. The sequence is that of Ribosomal RNA small subunit methyltransferase A from Salmonella schwarzengrund (strain CVM19633).